Consider the following 346-residue polypeptide: Holliday junction branch migration complex subunit RuvB (346 aa).

Residues 1–182 are large ATPase domain (RuvB-L); sequence MSEPARLISP…FGIPVRLSFY (182 aa). Residues Leu-21, Arg-22, Gly-63, Lys-66, Thr-67, Thr-68, 129-131, Arg-172, Tyr-182, and Arg-219 contribute to the ATP site; that span reads EDF. Thr-67 provides a ligand contact to Mg(2+). Positions 183–253 are small ATPAse domain (RuvB-S); the sequence is TVEELELIVR…IADEALTRLL (71 aa). The tract at residues 256-346 is head domain (RuvB-H); sequence NVGFDQLDKR…AQFRLFQEDN (91 aa). Positions 292, 311, and 316 each coordinate DNA.

It belongs to the RuvB family. Homohexamer. Forms an RuvA(8)-RuvB(12)-Holliday junction (HJ) complex. HJ DNA is sandwiched between 2 RuvA tetramers; dsDNA enters through RuvA and exits via RuvB. An RuvB hexamer assembles on each DNA strand where it exits the tetramer. Each RuvB hexamer is contacted by two RuvA subunits (via domain III) on 2 adjacent RuvB subunits; this complex drives branch migration. In the full resolvosome a probable DNA-RuvA(4)-RuvB(12)-RuvC(2) complex forms which resolves the HJ.

It localises to the cytoplasm. It catalyses the reaction ATP + H2O = ADP + phosphate + H(+). In terms of biological role, the RuvA-RuvB-RuvC complex processes Holliday junction (HJ) DNA during genetic recombination and DNA repair, while the RuvA-RuvB complex plays an important role in the rescue of blocked DNA replication forks via replication fork reversal (RFR). RuvA specifically binds to HJ cruciform DNA, conferring on it an open structure. The RuvB hexamer acts as an ATP-dependent pump, pulling dsDNA into and through the RuvAB complex. RuvB forms 2 homohexamers on either side of HJ DNA bound by 1 or 2 RuvA tetramers; 4 subunits per hexamer contact DNA at a time. Coordinated motions by a converter formed by DNA-disengaged RuvB subunits stimulates ATP hydrolysis and nucleotide exchange. Immobilization of the converter enables RuvB to convert the ATP-contained energy into a lever motion, pulling 2 nucleotides of DNA out of the RuvA tetramer per ATP hydrolyzed, thus driving DNA branch migration. The RuvB motors rotate together with the DNA substrate, which together with the progressing nucleotide cycle form the mechanistic basis for DNA recombination by continuous HJ branch migration. Branch migration allows RuvC to scan DNA until it finds its consensus sequence, where it cleaves and resolves cruciform DNA. The polypeptide is Holliday junction branch migration complex subunit RuvB (Rhizobium leguminosarum bv. trifolii (strain WSM2304)).